A 508-amino-acid polypeptide reads, in one-letter code: MPPSNPAMVNGLNGSHANGNGNGHNHISDSGSETSGESSNGSGRRRMKLNRKMSSPMAPPFMVSAPGKVIVFGEHSVVHGKAAIAAAISLRSYLHVTTLSKSKRTVSLRFADIGLVHTWNIEDLPWEAFQQPSKKKSYYSLVTELDPDLVAAIQPHIEVVSPNHPEEIRRVHHSSVSAFLYLFLSLGSPSFPPCLYTLRSTIPIGAGLGSSASVSVCLASALLLQLRTLSGPHPDQPADEARLQVERINRWAFVSEMCIHGNPSGVDNTVATQGKAVVFQRTDYSKPPNVRPLWDFPELPLLLVDTRQAKSTAHEVAKVAKLKQTHPKLVNSILDAMDKVTDAASELIEETSFDNGSVEDLSKVGELMTINHGLLVSLGVSHPRLERVRELVDHEGIGWTKLTGAGGGGCSITLLRPDVPAEKLQKLEERLETENYAKFETTLGGDGIGVLWPAVLKNGTEEDEEGGMEIDLEKFLEAEGTEGVEKLVGVHGDTGEREGWKFWRVESQ.

The tract at residues 1–46 (MPPSNPAMVNGLNGSHANGNGNGHNHISDSGSETSGESSNGSGRRR) is disordered. Residues 10 to 42 (NGLNGSHANGNGNGHNHISDSGSETSGESSNGS) are compositionally biased toward low complexity. ATP-binding positions include lysine 68, serine 200, and 205–211 (GAGLGSS). 2 residues coordinate Mg(2+): serine 211 and glutamate 256. Aspartate 267 functions as the Proton acceptor in the catalytic mechanism.

Belongs to the GHMP kinase family. Mevalonate kinase subfamily. In terms of assembly, homodimer. Mg(2+) serves as cofactor.

It is found in the cytoplasm. Its subcellular location is the cytosol. It catalyses the reaction (R)-mevalonate + ATP = (R)-5-phosphomevalonate + ADP + H(+). It functions in the pathway isoprenoid biosynthesis; isopentenyl diphosphate biosynthesis via mevalonate pathway; isopentenyl diphosphate from (R)-mevalonate: step 1/3. Functionally, mevalonate kinase; part of the second module of ergosterol biosynthesis pathway that includes the middle steps of the pathway. ERG12 converts mevalonate into 5-phosphomevalonate. The second module is carried out in the vacuole and involves the formation of farnesyl diphosphate, which is also an important intermediate in the biosynthesis of ubiquinone, dolichol, heme and prenylated proteins. Activity by the mevalonate kinase ERG12 (FG05912) first converts mevalonate into 5-phosphomevalonate. 5-phosphomevalonate is then further converted to 5-diphosphomevalonate by the phosphomevalonate kinase ERG8 (FG09764). The diphosphomevalonate decarboxylase ERG19 (FG10424) then produces isopentenyl diphosphate. The isopentenyl-diphosphate delta-isomerase IDI1 (FG09722) then catalyzes the 1,3-allylic rearrangement of the homoallylic substrate isopentenyl (IPP) to its highly electrophilic allylic isomer, dimethylallyl diphosphate (DMAPP). Finally the farnesyl diphosphate synthase ERG20 (FG06784) catalyzes the sequential condensation of isopentenyl pyrophosphate with dimethylallyl pyrophosphate, and then with the resultant geranylpyrophosphate to the ultimate product farnesyl pyrophosphate. The polypeptide is Mevalonate kinase ERG12 (Gibberella zeae (strain ATCC MYA-4620 / CBS 123657 / FGSC 9075 / NRRL 31084 / PH-1) (Wheat head blight fungus)).